We begin with the raw amino-acid sequence, 563 residues long: Membrane protein insertase YidC (563 aa).

The chain crosses the membrane as a helical span at residues 1-21 (MDIKRTILIVALAIVTYVGVL). Positions 43–62 (APGIPDTAAGTNGSASADVP) are disordered. The next 5 helical transmembrane spans lie at 344 to 364 (LELTVDYGFLWFIAQPIFWLL), 370 to 390 (ILGNWGWSIIVLTMLIKGLFF), 440 to 460 (LGGCLPILVQMPVFLSLYWVL), 471 to 491 (WILWITDLSIKDPFFILPIIM), and 518 to 538 (PIIFTFFFLWFPAGLVLYWVV).

This sequence belongs to the OXA1/ALB3/YidC family. Type 1 subfamily. In terms of assembly, interacts with the Sec translocase complex via SecD. Specifically interacts with transmembrane segments of nascent integral membrane proteins during membrane integration.

It is found in the cell inner membrane. Its function is as follows. Required for the insertion and/or proper folding and/or complex formation of integral membrane proteins into the membrane. Involved in integration of membrane proteins that insert both dependently and independently of the Sec translocase complex, as well as at least some lipoproteins. Aids folding of multispanning membrane proteins. The protein is Membrane protein insertase YidC of Pseudomonas syringae pv. syringae (strain B728a).